We begin with the raw amino-acid sequence, 44 residues long: DNA-directed RNA polymerase subunit Rpo12 (44 aa).

Positions 8, 22, and 25 each coordinate Zn(2+).

It belongs to the archaeal Rpo12/eukaryotic RPC10 RNA polymerase subunit family. As to quaternary structure, part of the RNA polymerase complex. It depends on Zn(2+) as a cofactor.

It is found in the cytoplasm. It catalyses the reaction RNA(n) + a ribonucleoside 5'-triphosphate = RNA(n+1) + diphosphate. Its function is as follows. DNA-dependent RNA polymerase (RNAP) catalyzes the transcription of DNA into RNA using the four ribonucleoside triphosphates as substrates. The polypeptide is DNA-directed RNA polymerase subunit Rpo12 (Halobacterium salinarum (strain ATCC 29341 / DSM 671 / R1)).